We begin with the raw amino-acid sequence, 354 residues long: Hyaluronan and proteoglycan link protein 1 (354 aa).

Residues 1 to 15 (MKSLLLLVLISFCWA) constitute a propeptide that is removed on maturation. Residues Asn-21 and Asn-56 are each glycosylated (N-linked (GlcNAc...) asparagine). The Ig-like V-type domain occupies 38-152 (PRLLVEAEQA…EGLEDDTAVV (115 aa)). Cystine bridges form between Cys-61–Cys-139, Cys-181–Cys-252, Cys-205–Cys-226, Cys-279–Cys-349, and Cys-304–Cys-325. Link domains lie at 159-254 (VVFP…FCFT) and 259-351 (GRFY…YCFR).

Belongs to the HAPLN family.

Its subcellular location is the secreted. The protein resides in the extracellular space. It is found in the extracellular matrix. Functionally, stabilizes the aggregates of proteoglycan monomers with hyaluronic acid in the extracellular cartilage matrix. This chain is Hyaluronan and proteoglycan link protein 1 (HAPLN1), found in Bos taurus (Bovine).